The primary structure comprises 564 residues: Dihydroxy-acid dehydratase (564 aa).

Cys55 is a binding site for [2Fe-2S] cluster. A Mg(2+)-binding site is contributed by Asp87. Cys128 contributes to the [2Fe-2S] cluster binding site. 2 residues coordinate Mg(2+): Asp129 and Lys130. Lys130 bears the N6-carboxylysine mark. Cys200 contacts [2Fe-2S] cluster. Glu452 contributes to the Mg(2+) binding site. Ser478 functions as the Proton acceptor in the catalytic mechanism.

It belongs to the IlvD/Edd family. As to quaternary structure, homodimer. Requires [2Fe-2S] cluster as cofactor. Mg(2+) is required as a cofactor.

The enzyme catalyses (2R)-2,3-dihydroxy-3-methylbutanoate = 3-methyl-2-oxobutanoate + H2O. It carries out the reaction (2R,3R)-2,3-dihydroxy-3-methylpentanoate = (S)-3-methyl-2-oxopentanoate + H2O. It functions in the pathway amino-acid biosynthesis; L-isoleucine biosynthesis; L-isoleucine from 2-oxobutanoate: step 3/4. Its pathway is amino-acid biosynthesis; L-valine biosynthesis; L-valine from pyruvate: step 3/4. Functionally, functions in the biosynthesis of branched-chain amino acids. Catalyzes the dehydration of (2R,3R)-2,3-dihydroxy-3-methylpentanoate (2,3-dihydroxy-3-methylvalerate) into 2-oxo-3-methylpentanoate (2-oxo-3-methylvalerate) and of (2R)-2,3-dihydroxy-3-methylbutanoate (2,3-dihydroxyisovalerate) into 2-oxo-3-methylbutanoate (2-oxoisovalerate), the penultimate precursor to L-isoleucine and L-valine, respectively. This is Dihydroxy-acid dehydratase from Polaromonas naphthalenivorans (strain CJ2).